Consider the following 456-residue polypeptide: Bifunctional protein GlmU (456 aa).

The interval 1-230 is pyrophosphorylase; the sequence is MDKRFAVILA…FQETLGVNDR (230 aa). UDP-N-acetyl-alpha-D-glucosamine contacts are provided by residues 9-12, lysine 23, glutamine 73, and 78-79; these read LAAG and GT. Aspartate 103 contacts Mg(2+). The UDP-N-acetyl-alpha-D-glucosamine site is built by glycine 140, glutamate 155, asparagine 170, and asparagine 228. Asparagine 228 lines the Mg(2+) pocket. The tract at residues 231–251 is linker; sequence VALSQAEMYMKERINKRHMQN. Positions 252–456 are N-acetyltransferase; that stretch reads GVTLIDPMNT…EDYVKNIHKK (205 aa). The UDP-N-acetyl-alpha-D-glucosamine site is built by arginine 333 and lysine 351. Histidine 363 (proton acceptor) is an active-site residue. UDP-N-acetyl-alpha-D-glucosamine contacts are provided by tyrosine 366 and asparagine 377. Acetyl-CoA-binding positions include 386-387, alanine 423, and arginine 440; that span reads NY.

It in the N-terminal section; belongs to the N-acetylglucosamine-1-phosphate uridyltransferase family. In the C-terminal section; belongs to the transferase hexapeptide repeat family. Homotrimer. Requires Mg(2+) as cofactor.

The protein resides in the cytoplasm. The enzyme catalyses alpha-D-glucosamine 1-phosphate + acetyl-CoA = N-acetyl-alpha-D-glucosamine 1-phosphate + CoA + H(+). It catalyses the reaction N-acetyl-alpha-D-glucosamine 1-phosphate + UTP + H(+) = UDP-N-acetyl-alpha-D-glucosamine + diphosphate. Its pathway is nucleotide-sugar biosynthesis; UDP-N-acetyl-alpha-D-glucosamine biosynthesis; N-acetyl-alpha-D-glucosamine 1-phosphate from alpha-D-glucosamine 6-phosphate (route II): step 2/2. The protein operates within nucleotide-sugar biosynthesis; UDP-N-acetyl-alpha-D-glucosamine biosynthesis; UDP-N-acetyl-alpha-D-glucosamine from N-acetyl-alpha-D-glucosamine 1-phosphate: step 1/1. It participates in bacterial outer membrane biogenesis; LPS lipid A biosynthesis. Functionally, catalyzes the last two sequential reactions in the de novo biosynthetic pathway for UDP-N-acetylglucosamine (UDP-GlcNAc). The C-terminal domain catalyzes the transfer of acetyl group from acetyl coenzyme A to glucosamine-1-phosphate (GlcN-1-P) to produce N-acetylglucosamine-1-phosphate (GlcNAc-1-P), which is converted into UDP-GlcNAc by the transfer of uridine 5-monophosphate (from uridine 5-triphosphate), a reaction catalyzed by the N-terminal domain. This Bacillus velezensis (strain DSM 23117 / BGSC 10A6 / LMG 26770 / FZB42) (Bacillus amyloliquefaciens subsp. plantarum) protein is Bifunctional protein GlmU.